The sequence spans 88 residues: Apolipoprotein C-I (88 aa).

The first 26 residues, M1 to A26, serve as a signal peptide directing secretion.

Belongs to the apolipoprotein C1 family. Adult and fetal liver.

It is found in the secreted. Functionally, inhibitor of lipoprotein binding to the low density lipoprotein (LDL) receptor, LDL receptor-related protein, and very low density lipoprotein (VLDL) receptor. Associates with high density lipoproteins (HDL) and the triacylglycerol-rich lipoproteins in the plasma and makes up about 10% of the protein of the VLDL and 2% of that of HDL. Appears to interfere directly with fatty acid uptake and is also the major plasma inhibitor of cholesteryl ester transfer protein (CETP). Modulates the interaction of APOE with beta-migrating VLDL and inhibits binding of beta-VLDL to the LDL receptor-related protein. Binds free fatty acids and reduces their intracellular esterification. This Mus musculus (Mouse) protein is Apolipoprotein C-I (Apoc1).